A 94-amino-acid polypeptide reads, in one-letter code: Selenoprotein K (94 aa).

A helical transmembrane segment spans residues 20-42 (LSLITDFFWGIAEFVVLFFKTLL). Residues 47–94 (KKGRGYRNSSDSRYDDGRGPPGNPPRRMGRISHLHGPSPPPMAGGUGR) form a disordered region. Position 92 (Sec-92) is a non-standard amino acid, selenocysteine.

This sequence belongs to the selenoprotein K family. In terms of assembly, interacts with DERL1, DERL2, DERL3 and SELENOS. The SELENOK-SELENOS complex interacts with VCP. Interacts with ZDHHC6. Post-translationally, cleaved by CAPN2/m-calpain in resting macrophages but not in activated macrophages. Macrophage activation up-regulates expression of the calpain inhibitor CAST/calpastatin, resulting in inhibition of CAPN2 activity. Truncated SELENOK proteins produced by failed UGA/Sec decoding are ubiquitinated by the CRL2(KLHDC2) complex, which recognizes the diglycine (Gly-Gly) at the C-terminus of truncated SELENOK proteins.

The protein localises to the endoplasmic reticulum membrane. The protein resides in the cell membrane. In terms of biological role, required for Ca(2+) flux in immune cells and plays a role in T-cell proliferation and in T-cell and neutrophil migration. Involved in endoplasmic reticulum-associated degradation (ERAD) of soluble glycosylated proteins. Required for palmitoylation and cell surface expression of CD36 and involved in macrophage uptake of low-density lipoprotein and in foam cell formation. Together with ZDHHC6, required for palmitoylation of ITPR1 in immune cells, leading to regulate ITPR1 stability and function. Plays a role in protection of cells from ER stress-induced apoptosis. Protects cells from oxidative stress when overexpressed in cardiomyocytes. The protein is Selenoprotein K of Chinchilla lanigera (Long-tailed chinchilla).